Consider the following 274-residue polypeptide: Glutamate racemase (274 aa).

Substrate contacts are provided by residues 9 to 10 (DS) and 41 to 42 (YG). C73 acts as the Proton donor/acceptor in catalysis. 74–75 (NT) serves as a coordination point for substrate. The Proton donor/acceptor role is filled by C183. 184–185 (TH) provides a ligand contact to substrate.

The protein belongs to the aspartate/glutamate racemases family.

The catalysed reaction is L-glutamate = D-glutamate. Its pathway is cell wall biogenesis; peptidoglycan biosynthesis. In terms of biological role, provides the (R)-glutamate required for cell wall biosynthesis. In Shewanella baltica (strain OS195), this protein is Glutamate racemase.